Consider the following 253-residue polypeptide: Uracil-DNA glycosylase (253 aa).

The active-site Proton acceptor is Asp79.

It belongs to the uracil-DNA glycosylase (UDG) superfamily. UNG family.

Its subcellular location is the cytoplasm. The enzyme catalyses Hydrolyzes single-stranded DNA or mismatched double-stranded DNA and polynucleotides, releasing free uracil.. Functionally, excises uracil residues from the DNA which can arise as a result of misincorporation of dUMP residues by DNA polymerase or due to deamination of cytosine. The protein is Uracil-DNA glycosylase of Xylella fastidiosa (strain M23).